A 236-amino-acid polypeptide reads, in one-letter code: 2-C-methyl-D-erythritol 4-phosphate cytidylyltransferase (236 aa).

This sequence belongs to the IspD/TarI cytidylyltransferase family. IspD subfamily. As to quaternary structure, homodimer.

The catalysed reaction is 2-C-methyl-D-erythritol 4-phosphate + CTP + H(+) = 4-CDP-2-C-methyl-D-erythritol + diphosphate. Its pathway is isoprenoid biosynthesis; isopentenyl diphosphate biosynthesis via DXP pathway; isopentenyl diphosphate from 1-deoxy-D-xylulose 5-phosphate: step 2/6. Catalyzes the formation of 4-diphosphocytidyl-2-C-methyl-D-erythritol from CTP and 2-C-methyl-D-erythritol 4-phosphate (MEP). In Escherichia coli O139:H28 (strain E24377A / ETEC), this protein is 2-C-methyl-D-erythritol 4-phosphate cytidylyltransferase.